We begin with the raw amino-acid sequence, 341 residues long: Geranylgeranyl pyrophosphate synthase penG (341 aa).

Residues K68, R71, and H100 each contribute to the isopentenyl diphosphate site. 2 residues coordinate Mg(2+): D107 and D111. R116 contacts dimethylallyl diphosphate. R117 is a binding site for isopentenyl diphosphate. 3 residues coordinate dimethylallyl diphosphate: K194, T195, and Q228. D231 provides a ligand contact to Mg(2+). Residues N235, K245, and K255 each coordinate dimethylallyl diphosphate.

Belongs to the FPP/GGPP synthase family. Requires Mg(2+) as cofactor.

It carries out the reaction isopentenyl diphosphate + dimethylallyl diphosphate = (2E)-geranyl diphosphate + diphosphate. The catalysed reaction is isopentenyl diphosphate + (2E)-geranyl diphosphate = (2E,6E)-farnesyl diphosphate + diphosphate. The enzyme catalyses isopentenyl diphosphate + (2E,6E)-farnesyl diphosphate = (2E,6E,10E)-geranylgeranyl diphosphate + diphosphate. The protein operates within secondary metabolite biosynthesis. In terms of biological role, geranylgeranyl pyrophosphate synthase; part of the gene cluster that mediates the biosynthesis of the indole diterpenes penitrems. The geranylgeranyl diphosphate (GGPP) synthase penG catalyzes the first step in penitrem biosynthesis via conversion of farnesyl pyrophosphate and isopentyl pyrophosphate into geranylgeranyl pyrophosphate (GGPP). Condensation of indole-3-glycerol phosphate with GGPP by the prenyl transferase penC then forms 3-geranylgeranylindole (3-GGI). Epoxidation by the FAD-dependent monooxygenase penM leads to a epoxidized-GGI that is substrate of the terpene cyclase penB for cyclization to yield paspaline. Paspaline is subsequently converted to 13-desoxypaxilline by the cytochrome P450 monooxygenase penP, the latter being then converted to paxilline by the cytochrome P450 monooxygenase penQ. Paxilline is converted to beta-paxitriol via C-10 ketoreduction by the short-chain dehydrogenase PC-15 which can be monoprenylated at the C-20 by the indole diterpene prenyltransferase penD. A two-step elimination (acetylation and elimination) process performed by the O-acetyltransferase PC-16 and the P.simplicissimum ptmI-ortholog not yet identified in P.crustosum, leads to the production of the prenylated form of penijanthine. The FAD-linked oxidoreductase ptmO then converts the prenylated form of penijanthine into PC-M5 which is in turn transformed into PC-M4 by the aromatic dimethylallyltransferase PC-22. A series of oxidation steps involving 4 cytochrome P450 monooxygenases (PC-21, PC-05, PC-23, PC-20) and a FAD-dependent monooxygenase (PC-14) are required for the transformation of PC-M4 to penitrems A and E. Synthesis of these final products is proposed to proceed via penitrems D and C (PC-21, PC-05, PC-14) and penitrems B and F (PC-21, PC-05, PC-14, PC-23). This chain is Geranylgeranyl pyrophosphate synthase penG, found in Penicillium crustosum (Blue mold fungus).